The primary structure comprises 197 residues: Rac-like GTP-binding protein ARAC6 (197 aa).

Residue 13-20 participates in GTP binding; sequence GDGAVGKT. The short motif at 35 to 43 is the Effector region element; that stretch reads YVPTVFDNF. Residues 60 to 64 and 118 to 121 each bind GTP; these read DTAGQ and TKLD. GDP is bound at residue serine 160. Cysteine methyl ester is present on cysteine 194. Residue cysteine 194 is the site of S-geranylgeranyl cysteine attachment. Positions 195-197 are cleaved as a propeptide — removed in mature form; the sequence is SIL.

It belongs to the small GTPase superfamily. Rho family. In terms of assembly, interacts with SPK1. As to expression, ubiquitous. Preferentially expressed in mature pollen and pollen tubes.

It localises to the cytoplasm. It is found in the membrane. May be involved in cell polarity control during the actin-dependent tip growth of pollen tubes. In terms of biological role, inactive GDP-bound Rho GTPases reside in the cytosol, are found in a complex with Rho GDP-dissociation inhibitors (Rho GDIs), and are released from the GDI protein in order to translocate to membranes upon activation. The protein is Rac-like GTP-binding protein ARAC6 (ARAC6) of Arabidopsis thaliana (Mouse-ear cress).